The chain runs to 889 residues: Translation initiation factor IF-2 (889 aa).

Residues 115 to 236 show a composition bias toward basic and acidic residues; it reads EAEAQAKAEA…EAERYSDHHI (122 aa). Residues 115 to 293 form a disordered region; it reads EAEAQAKAEA…RNRSTAPESM (179 aa). Basic residues predominate over residues 257-270; it reads GRRARNKNTAKTKR. Basic and acidic residues predominate over residues 271–280; that stretch reads GGKDARDGRE. The region spanning 389 to 558 is the tr-type G domain; sequence PRAPVVTIMG…LLQAEVLELK (170 aa). The segment at 398-405 is G1; the sequence is GHVDHGKT. 398 to 405 lines the GTP pocket; that stretch reads GHVDHGKT. The interval 423-427 is G2; that stretch reads GITQH. A G3 region spans residues 444–447; sequence DTPG. Residues 444–448 and 498–501 each bind GTP; these read DTPGH and NKMD. A G4 region spans residues 498 to 501; that stretch reads NKMD. A G5 region spans residues 534–536; sequence SAK.

Belongs to the TRAFAC class translation factor GTPase superfamily. Classic translation factor GTPase family. IF-2 subfamily.

The protein resides in the cytoplasm. In terms of biological role, one of the essential components for the initiation of protein synthesis. Protects formylmethionyl-tRNA from spontaneous hydrolysis and promotes its binding to the 30S ribosomal subunits. Also involved in the hydrolysis of GTP during the formation of the 70S ribosomal complex. The protein is Translation initiation factor IF-2 of Shewanella sp. (strain ANA-3).